A 186-amino-acid polypeptide reads, in one-letter code: CASP-like protein ARALYDRAFT_316979 (186 aa).

The Cytoplasmic segment spans residues M1–Q23. Residues V24–A44 traverse the membrane as a helical segment. Residues T45–Q70 are Extracellular-facing. N62 carries N-linked (GlcNAc...) asparagine glycosylation. The chain crosses the membrane as a helical span at residues Y71–V91. Residues Y92 to Q115 lie on the Cytoplasmic side of the membrane. Residues L116–T132 form a helical membrane-spanning segment. Over N133 to S161 the chain is Extracellular. N135 carries an N-linked (GlcNAc...) asparagine glycan. The helical transmembrane segment at L162–V182 threads the bilayer. Topologically, residues L183–P186 are cytoplasmic.

Belongs to the Casparian strip membrane proteins (CASP) family. Homodimer and heterodimers.

It localises to the cell membrane. The protein is CASP-like protein ARALYDRAFT_316979 of Arabidopsis lyrata subsp. lyrata (Lyre-leaved rock-cress).